The chain runs to 147 residues: Protein SOB FIVE-LIKE 2 (147 aa).

The short motif at 18-23 (SGWTMY) is the SOFL-A element. The segment at 32–147 (HHSEVVYEEE…ASRVKVSKTK (116 aa)) is disordered. Acidic residues predominate over residues 37–77 (VYEEEDDGFSVKEVDDDGDGDEDDDDDDDDDSSNNESDDSM). The short motif at 76 to 85 (SMTSDASSWP) is the SOFL-B element. A compositionally biased stretch (polar residues) spans 78–93 (TSDASSWPSTHQPPRS). Over residues 96–106 (NHAAAKNSNAK) the composition is skewed to low complexity. The span at 114–131 (NRVRDRFSDEGEESELKA) shows a compositional bias: basic and acidic residues.

This sequence belongs to the SOFL plant protein family. In terms of tissue distribution, predominantly expressed in the vascular tissues of seedlings, developing leaves, flowers and siliques, but barely detectable in roots and stems.

Its subcellular location is the cytoplasm. It is found in the nucleus. In terms of biological role, involved in cytokinin-mediated development. Together with SOFL2, triggers the endogenous content of specific bioactive cytokinins derived from the biosynthetic intermediates trans-zeatin riboside monophosphate (tZRMP) and N(6)-(Delta(2)-isopentenyl)adenosine monophosphate (iPRMP) such as N-glucosides trans-zeatin 7-glucoside (tZ7G), cis-zeatin 7-glucoside (cZ7G) and N(6)-(Delta(2)-isopentenyl)adenine 7-glucoside (iP7G). This Arabidopsis thaliana (Mouse-ear cress) protein is Protein SOB FIVE-LIKE 2.